The chain runs to 176 residues: Peptide methionine sulfoxide reductase MsrA (176 aa).

Residue Cys-10 is part of the active site.

Belongs to the MsrA Met sulfoxide reductase family.

It catalyses the reaction L-methionyl-[protein] + [thioredoxin]-disulfide + H2O = L-methionyl-(S)-S-oxide-[protein] + [thioredoxin]-dithiol. The enzyme catalyses [thioredoxin]-disulfide + L-methionine + H2O = L-methionine (S)-S-oxide + [thioredoxin]-dithiol. Has an important function as a repair enzyme for proteins that have been inactivated by oxidation. Catalyzes the reversible oxidation-reduction of methionine sulfoxide in proteins to methionine. The sequence is that of Peptide methionine sulfoxide reductase MsrA from Leptospira borgpetersenii serovar Hardjo-bovis (strain L550).